The primary structure comprises 468 residues: ATP synthase subunit beta (468 aa).

G155–T162 lines the ATP pocket.

This sequence belongs to the ATPase alpha/beta chains family. F-type ATPases have 2 components, CF(1) - the catalytic core - and CF(0) - the membrane proton channel. CF(1) has five subunits: alpha(3), beta(3), gamma(1), delta(1), epsilon(1). CF(0) has three main subunits: a(1), b(2) and c(9-12). The alpha and beta chains form an alternating ring which encloses part of the gamma chain. CF(1) is attached to CF(0) by a central stalk formed by the gamma and epsilon chains, while a peripheral stalk is formed by the delta and b chains.

Its subcellular location is the cell membrane. It carries out the reaction ATP + H2O + 4 H(+)(in) = ADP + phosphate + 5 H(+)(out). Produces ATP from ADP in the presence of a proton gradient across the membrane. The catalytic sites are hosted primarily by the beta subunits. In Bacillus cereus (strain G9842), this protein is ATP synthase subunit beta.